Here is a 130-residue protein sequence, read N- to C-terminus: Histone H2B.1 (130 aa).

Positions Met1–Pro19 are enriched in basic and acidic residues. Positions Met1–Glu39 are disordered. Lys7 and Lys8 each carry N6-acetyllysine; alternate. Residues Lys7 and Lys8 each participate in a glycyl lysine isopeptide (Lys-Gly) (interchain with G-Cter in SUMO); alternate cross-link. Ser11 carries the phosphoserine modification. Lys12 bears the N6-acetyllysine mark. Residue Lys17 is modified to N6-acetyllysine; alternate. A Glycyl lysine isopeptide (Lys-Gly) (interchain with G-Cter in SUMO); alternate cross-link involves residue Lys17. Lys18 participates in a covalent cross-link: Glycyl lysine isopeptide (Lys-Gly) (interchain with G-Cter in SUMO). Residue Lys124 forms a Glycyl lysine isopeptide (Lys-Gly) (interchain with G-Cter in ubiquitin) linkage.

This sequence belongs to the histone H2B family. In terms of assembly, the nucleosome is a histone octamer containing two molecules each of H2A, H2B, H3 and H4 assembled in one H3-H4 heterotetramer and two H2A-H2B heterodimers. The octamer wraps approximately 147 bp of DNA. In terms of processing, monoubiquitinated by the UBC2-BRE1 complex to form H2BK123ub1. H2BK123ub1 gives a specific tag for epigenetic transcriptional activation and is also prerequisite for H3K4me and H3K79me formation. H2BK123ub1 also modulates the formation of double-strand breaks during meiosis and is a prerequisite for DNA-damage checkpoint activation. Phosphorylated by STE20 to form H2BS10ph during progression through meiotic prophase. May be correlated with chromosome condensation. Post-translationally, acetylated by GCN5 to form H2BK11ac and H2BK16ac. H2BK16ac can also be formed by ESA1. Acetylation of N-terminal lysines and particularly formation of H2BK11acK16ac has a positive effect on transcription. In terms of processing, sumoylation to form H2BK6su or H2BK7su, and probably also H2BK16su or H2BK17su, occurs preferentially near the telomeres and represses gene transcription.

It is found in the nucleus. The protein resides in the chromosome. Functionally, core component of nucleosome. Nucleosomes wrap and compact DNA into chromatin, limiting DNA accessibility to the cellular machineries which require DNA as a template. Histones thereby play a central role in transcription regulation, DNA repair, DNA replication and chromosomal stability. DNA accessibility is regulated via a complex set of post-translational modifications of histones, also called histone code, and nucleosome remodeling. In Debaryomyces hansenii (strain ATCC 36239 / CBS 767 / BCRC 21394 / JCM 1990 / NBRC 0083 / IGC 2968) (Yeast), this protein is Histone H2B.1 (HTB1).